The chain runs to 545 residues: Inosine-5'-monophosphate dehydrogenase (545 aa).

CBS domains are found at residues 138 to 194 and 201 to 258; these read MITD…DYDT and MTKE…PDAT. NAD(+) contacts are provided by residues aspartate 295 and 347 to 349; that span reads GIG. Residues glycine 349 and glycine 351 each coordinate K(+). Position 352 (serine 352) interacts with IMP. Cysteine 354 is a binding site for K(+). The Thioimidate intermediate role is filled by cysteine 354. IMP is bound by residues 387-389, 410-411, and 434-438; these read DGG, GG, and YRGMG. Arginine 455 functions as the Proton acceptor in the catalytic mechanism. Glutamate 470 provides a ligand contact to IMP. 3 residues coordinate K(+): glutamate 524, serine 525, and histidine 526.

It belongs to the IMPDH/GMPR family. In terms of assembly, homotetramer. K(+) is required as a cofactor.

The catalysed reaction is IMP + NAD(+) + H2O = XMP + NADH + H(+). It functions in the pathway purine metabolism; XMP biosynthesis via de novo pathway; XMP from IMP: step 1/1. Mycophenolic acid (MPA) is a non-competitive inhibitor that prevents formation of the closed enzyme conformation by binding to the same site as the amobile flap. In contrast, mizoribine monophosphate (MZP) is a competitive inhibitor that induces the closed conformation. MPA is a potent inhibitor of mammalian IMPDHs but a poor inhibitor of the bacterial enzymes. MZP is a more potent inhibitor of bacterial IMPDH. Functionally, catalyzes the conversion of inosine 5'-phosphate (IMP) to xanthosine 5'-phosphate (XMP), the first committed and rate-limiting step in the de novo synthesis of guanine nucleotides, and therefore plays an important role in the regulation of cell growth. The sequence is that of Inosine-5'-monophosphate dehydrogenase from Bifidobacterium longum (strain NCC 2705).